An 87-amino-acid chain; its full sequence is Large ribosomal subunit protein bL27 (87 aa).

This sequence belongs to the bacterial ribosomal protein bL27 family.

This is Large ribosomal subunit protein bL27 from Dichelobacter nodosus (strain VCS1703A).